A 138-amino-acid chain; its full sequence is MLKEFREFAMKGNVVDLAVGVIIGGAFGAIVTSLVGDIIMPIIGAITGGLDFSNYFIPLAKSVTATNLADAKKQGAVLAYGSFLTLTLNFFIVAFVLFMVIRGMNKLKRRQEAAPAAPPKPSAEVELLTEIRDLLKKA.

A run of 3 helical transmembrane segments spans residues 19 to 39 (VGVI…GDII), 40 to 60 (MPII…IPLA), and 81 to 101 (GSFL…FMVI).

The protein belongs to the MscL family. As to quaternary structure, homopentamer.

It is found in the cell inner membrane. Its function is as follows. Channel that opens in response to stretch forces in the membrane lipid bilayer. May participate in the regulation of osmotic pressure changes within the cell. This chain is Large-conductance mechanosensitive channel, found in Bradyrhizobium sp. (strain ORS 278).